The sequence spans 465 residues: Sodium-dependent phosphate transport protein 1 (465 aa).

2 N-linked (GlcNAc...) asparagine glycosylation sites follow: N47 and N56. The next 10 helical transmembrane spans lie at 79–99 (GIIFSSIFYGAFLIQIPVGYI), 109–129 (IGFALFLSSLVSIFIPQAAAV), 171–191 (MSLSGFLLGPFIVLLVTGIIC), 198–218 (MVFYIFGACGCAVCLLWFVLY), 255–275 (AMIKSLPLWAISFCCFAYLWT), 304–324 (LPYLFAWICGVIAGHTADFLM), 337–357 (LFTAIGLLLPIVFSMCLLYLS), 363–383 (TITFLILANASSSFCLGGALI), 399–419 (VTTLIGMTGGMTSSTVAGLFL), and 428–448 (FKIFLLMSIINVISVIFYLIF).

It belongs to the major facilitator superfamily. Sodium/anion cotransporter family. Interacts with PDZK1. In terms of tissue distribution, kidney cortex and liver.

It localises to the apical cell membrane. It carries out the reaction 3 Na(+)(out) + phosphate(out) = 3 Na(+)(in) + phosphate(in). The enzyme catalyses urate(out) = urate(in). In terms of biological role, important for the resorption of phosphate by the kidney. May be involved in actively transporting phosphate into cells via Na(+) cotransport in the renal brush border membrane. Plays a role in urate transport in the kidney. The sequence is that of Sodium-dependent phosphate transport protein 1 (SLC17A1) from Oryctolagus cuniculus (Rabbit).